A 580-amino-acid polypeptide reads, in one-letter code: Xylulose kinase (580 aa).

4 residues coordinate substrate: histidine 99, arginine 170, aspartate 280, and asparagine 281. Residues tryptophan 355, 441–442 (GA), and asparagine 445 each bind ATP.

This sequence belongs to the FGGY kinase family. As to quaternary structure, monomer.

The catalysed reaction is D-xylulose + ATP = D-xylulose 5-phosphate + ADP + H(+). In terms of biological role, phosphorylates D-xylulose to produce D-xylulose 5-phosphate, a molecule that may play an important role in the regulation of glucose metabolism and lipogenesis. This Pongo abelii (Sumatran orangutan) protein is Xylulose kinase (XYLB).